The following is a 161-amino-acid chain: Endoribonuclease YbeY (161 aa).

The Zn(2+) site is built by histidine 120, histidine 124, and histidine 130.

This sequence belongs to the endoribonuclease YbeY family. It depends on Zn(2+) as a cofactor.

It is found in the cytoplasm. Single strand-specific metallo-endoribonuclease involved in late-stage 70S ribosome quality control and in maturation of the 3' terminus of the 16S rRNA. This Erythrobacter litoralis (strain HTCC2594) protein is Endoribonuclease YbeY.